Reading from the N-terminus, the 710-residue chain is Interferon-induced GTP-binding protein Mx2 (710 aa).

The interval 1 to 51 (MSMSFRPLKYKRHTQTSTQHHPKQDIYFHQQPPGPPLGQTMSPPQWQVEES) is disordered. Residues 39–50 (QTMSPPQWQVEE) show a composition bias toward polar residues. The Dynamin-type G domain maps to 112–383 (DLALPAIAVI…LIWHINKSLP (272 aa)). The interval 122 to 129 (GDQSSGKS) is G1 motif. Position 122–129 (122–129 (GDQSSGKS)) interacts with GTP. The interval 147 to 149 (ITR) is G2 motif. Residues 221-224 (DLPG) are G3 motif. Residues 221 to 225 (DLPGI) and 290 to 293 (TKPD) each bind GTP. The tract at residues 290–293 (TKPD) is G4 motif. Residues 322 to 325 (KCRG) are G5 motif. Residues 619–710 (IVEIGVHLNA…ALYEFPHFKG (92 aa)) form the GED domain.

The protein belongs to the TRAFAC class dynamin-like GTPase superfamily. Dynamin/Fzo/YdjA family.

The protein localises to the cytoplasm. The protein resides in the nucleus. Its function is as follows. Interferon-induced dynamin-like GTPase with antiviral activity against vesicular stomatitis virus (VSV). This is Interferon-induced GTP-binding protein Mx2 (MX2) from Bos taurus (Bovine).